Consider the following 119-residue polypeptide: Protein TusC (119 aa).

Belongs to the DsrF/TusC family. Heterohexamer, formed by a dimer of trimers. The hexameric TusBCD complex contains 2 copies each of TusB, TusC and TusD. The TusBCD complex interacts with TusE.

It localises to the cytoplasm. In terms of biological role, part of a sulfur-relay system required for 2-thiolation of 5-methylaminomethyl-2-thiouridine (mnm(5)s(2)U) at tRNA wobble positions. This is Protein TusC from Escherichia coli O8 (strain IAI1).